Reading from the N-terminus, the 106-residue chain is Iron-sulfur cluster assembly protein CyaY (106 aa).

The protein belongs to the frataxin family. Interacts with IscS. Certain pairs of proteins can bind simultaneously to IscS; IscS-IscU-CyaY complexes can be isolated in vitro, but (IscS-TusA-CyaY) complexes cannot.

Functionally, involved in iron-sulfur (Fe-S) cluster assembly. May act as a regulator of Fe-S biogenesis. This is Iron-sulfur cluster assembly protein CyaY from Escherichia coli O157:H7.